A 172-amino-acid chain; its full sequence is Co-chaperone protein HscB homolog (172 aa).

The 73-residue stretch at 2 to 74 folds into the J domain; it reads NYFELFGLVE…LRRAEYLLSL (73 aa).

The protein belongs to the HscB family. As to quaternary structure, interacts with HscA and stimulates its ATPase activity.

Its function is as follows. Co-chaperone involved in the maturation of iron-sulfur cluster-containing proteins. Seems to help targeting proteins to be folded toward HscA. This is Co-chaperone protein HscB homolog from Aeromonas hydrophila subsp. hydrophila (strain ATCC 7966 / DSM 30187 / BCRC 13018 / CCUG 14551 / JCM 1027 / KCTC 2358 / NCIMB 9240 / NCTC 8049).